Consider the following 565-residue polypeptide: NAD-dependent malic enzyme (565 aa).

Residue Y104 is the Proton donor of the active site. R157 lines the NAD(+) pocket. K175 functions as the Proton acceptor in the catalytic mechanism. A divalent metal cation is bound by residues E246, D247, and D270. Residues D270 and N418 each coordinate NAD(+).

Belongs to the malic enzymes family. In terms of assembly, homotetramer. It depends on Mg(2+) as a cofactor. Mn(2+) is required as a cofactor.

The catalysed reaction is (S)-malate + NAD(+) = pyruvate + CO2 + NADH. It carries out the reaction oxaloacetate + H(+) = pyruvate + CO2. The chain is NAD-dependent malic enzyme from Escherichia coli O6:H1 (strain CFT073 / ATCC 700928 / UPEC).